The primary structure comprises 457 residues: tRNA-2-methylthio-N(6)-dimethylallyladenosine synthase (457 aa).

The region spanning 19–134 is the MTTase N-terminal domain; the sequence is RKLFIETYGC…LPNLVGAVEH (116 aa). [4Fe-4S] cluster contacts are provided by C28, C64, C98, C172, C176, and C179. The Radical SAM core domain maps to 158–390; sequence PGVHISGFVS…IDLQNKLSEE (233 aa). In terms of domain architecture, TRAM spans 393–456; sequence LRDIGKTFEV…SATLFGEPVE (64 aa).

It belongs to the methylthiotransferase family. MiaB subfamily. As to quaternary structure, monomer. [4Fe-4S] cluster serves as cofactor.

The protein localises to the cytoplasm. It catalyses the reaction N(6)-dimethylallyladenosine(37) in tRNA + (sulfur carrier)-SH + AH2 + 2 S-adenosyl-L-methionine = 2-methylsulfanyl-N(6)-dimethylallyladenosine(37) in tRNA + (sulfur carrier)-H + 5'-deoxyadenosine + L-methionine + A + S-adenosyl-L-homocysteine + 2 H(+). In terms of biological role, catalyzes the methylthiolation of N6-(dimethylallyl)adenosine (i(6)A), leading to the formation of 2-methylthio-N6-(dimethylallyl)adenosine (ms(2)i(6)A) at position 37 in tRNAs that read codons beginning with uridine. This is tRNA-2-methylthio-N(6)-dimethylallyladenosine synthase from Parabacteroides distasonis (strain ATCC 8503 / DSM 20701 / CIP 104284 / JCM 5825 / NCTC 11152).